We begin with the raw amino-acid sequence, 1877 residues long: Protein TIC 214 (1877 aa).

Transmembrane regions (helical) follow at residues 18-38 (IINS…FSIG), 67-87 (FIAG…HLAL), 90-110 (PHTI…WNNH), 127-147 (LSIQ…HFIL), 175-195 (VGWL…LVWI), and 224-244 (IFSI…PSPI). Basic and acidic residues predominate over residues 249-258 (FKETSETEER). Residues 249-308 (FKETSETEERGEGEEETDVEIETTFETKGTRQEQEGSTEEDPSLFSEEKEDPDKIDEREE) form a disordered region. Acidic residues-rich tracts occupy residues 259 to 271 (GEGE…EIET) and 284 to 298 (GSTE…EEKE). Over residues 299-308 (DPDKIDEREE) the composition is skewed to basic and acidic residues.

Belongs to the TIC214 family. As to quaternary structure, part of the Tic complex.

The protein resides in the plastid. It localises to the chloroplast inner membrane. Involved in protein precursor import into chloroplasts. May be part of an intermediate translocation complex acting as a protein-conducting channel at the inner envelope. This is Protein TIC 214 from Eucalyptus globulus subsp. globulus (Tasmanian blue gum).